The primary structure comprises 295 residues: Chromatin modification-related protein YNG2 (295 aa).

The interval 151–208 (NGTAGSGSSSGRKRPASSSSANGKGQKRKQQKKERSRSHQRAGTVSRDVSPNAGIGRD) is disordered. Positions 156-171 (SGSSSGRKRPASSSSA) are enriched in low complexity. The span at 175-190 (GQKRKQQKKERSRSHQ) shows a compositional bias: basic residues. The segment at 233–282 (QLYCFCQRVSYGEMVACDGPNCKYEWFHYSCVNLTEPPKGQWYCPECRLE) adopts a PHD-type zinc-finger fold. Residues C236, C238, C249, C254, H260, C263, C276, and C279 each coordinate Zn(2+).

The protein belongs to the ING family. In terms of assembly, interacts with H3K4me3 and to a lesser extent with H3K4me2. Component of the NuA4 histone acetyltransferase complex.

Its subcellular location is the nucleus. In terms of biological role, component of the NuA4 histone acetyltransferase complex which is involved in transcriptional activation of selected genes principally by acetylation of nucleosomal histone H4 and H2A. The NuA4 complex is also involved in DNA repair. Involved in cell cycle progression and meiosis. This chain is Chromatin modification-related protein YNG2 (YNG2), found in Kluyveromyces lactis (strain ATCC 8585 / CBS 2359 / DSM 70799 / NBRC 1267 / NRRL Y-1140 / WM37) (Yeast).